Reading from the N-terminus, the 388-residue chain is Chorismate synthase (388 aa).

Residues Arg40 and Arg46 each coordinate NADP(+). Residues 131–133, 252–253, Gly296, 311–315, and Arg337 contribute to the FMN site; these read RSS, NA, and KPIPT.

This sequence belongs to the chorismate synthase family. As to quaternary structure, homotetramer. The cofactor is FMNH2.

It carries out the reaction 5-O-(1-carboxyvinyl)-3-phosphoshikimate = chorismate + phosphate. It participates in metabolic intermediate biosynthesis; chorismate biosynthesis; chorismate from D-erythrose 4-phosphate and phosphoenolpyruvate: step 7/7. In terms of biological role, catalyzes the anti-1,4-elimination of the C-3 phosphate and the C-6 proR hydrogen from 5-enolpyruvylshikimate-3-phosphate (EPSP) to yield chorismate, which is the branch point compound that serves as the starting substrate for the three terminal pathways of aromatic amino acid biosynthesis. This reaction introduces a second double bond into the aromatic ring system. This is Chorismate synthase from Limosilactobacillus fermentum (strain NBRC 3956 / LMG 18251) (Lactobacillus fermentum).